A 424-amino-acid chain; its full sequence is Serine--tRNA ligase 1 (424 aa).

232–234 (TAE) provides a ligand contact to L-serine. Position 263–265 (263–265 (RSE)) interacts with ATP. L-serine is bound at residue Glu-286. ATP is bound at residue 350-353 (EISS). Residue Ser-386 participates in L-serine binding.

Belongs to the class-II aminoacyl-tRNA synthetase family. Type-1 seryl-tRNA synthetase subfamily. Homodimer. The tRNA molecule binds across the dimer.

It localises to the cytoplasm. The enzyme catalyses tRNA(Ser) + L-serine + ATP = L-seryl-tRNA(Ser) + AMP + diphosphate + H(+). It catalyses the reaction tRNA(Sec) + L-serine + ATP = L-seryl-tRNA(Sec) + AMP + diphosphate + H(+). Its pathway is aminoacyl-tRNA biosynthesis; selenocysteinyl-tRNA(Sec) biosynthesis; L-seryl-tRNA(Sec) from L-serine and tRNA(Sec): step 1/1. In terms of biological role, catalyzes the attachment of serine to tRNA(Ser). Is also able to aminoacylate tRNA(Sec) with serine, to form the misacylated tRNA L-seryl-tRNA(Sec), which will be further converted into selenocysteinyl-tRNA(Sec). This chain is Serine--tRNA ligase 1, found in Clostridium acetobutylicum (strain ATCC 824 / DSM 792 / JCM 1419 / IAM 19013 / LMG 5710 / NBRC 13948 / NRRL B-527 / VKM B-1787 / 2291 / W).